We begin with the raw amino-acid sequence, 416 residues long: Transcription termination factor Rho (416 aa).

Residues leucine 51–lysine 121 enclose the Rho RNA-BD domain. Residues glycine 162–glycine 167, lysine 174–threonine 179, and arginine 205 contribute to the ATP site.

It belongs to the Rho family. In terms of assembly, homohexamer. The homohexamer assembles into an open ring structure.

In terms of biological role, facilitates transcription termination by a mechanism that involves Rho binding to the nascent RNA, activation of Rho's RNA-dependent ATPase activity, and release of the mRNA from the DNA template. This is Transcription termination factor Rho from Streptobacillus moniliformis (strain ATCC 14647 / DSM 12112 / NCTC 10651 / 9901).